We begin with the raw amino-acid sequence, 118 residues long: Myotrophin (118 aa).

3 ANK repeats span residues 1-30 (MGDKEFVWAIKNGDLDAVKEFVLGGEDVNR), 34-65 (GGRKPMHYAADCGQDEVLEFLLSKGANINAAD), and 67-98 (HGITPLLSACYEGHRKCVELLLSKGADKTVKG).

This sequence belongs to the myotrophin family.

The protein resides in the cytoplasm. Its subcellular location is the nucleus. It is found in the perinuclear region. Its function is as follows. Regulates NF-kappa-B transcription factor activity. Promotes growth of cardiomyocytes, but not cardiomyocyte proliferation. Promotes cardiac muscle hypertrophy. Plays a role in the regulation of the growth of actin filaments. Inhibits the activity of the F-actin-capping protein complex. This chain is Myotrophin (mtpn), found in Xenopus tropicalis (Western clawed frog).